A 543-amino-acid chain; its full sequence is Cytochrome P450 52A1 (543 aa).

Over M1–K28 the chain is Lumenal. Residues W29–T48 traverse the membrane as a helical segment. The Cytoplasmic portion of the chain corresponds to K49–L543. C487 contacts heme.

It belongs to the cytochrome P450 family. Heme serves as cofactor.

The protein localises to the endoplasmic reticulum membrane. Together with an NADPH cytochrome P450 the enzyme system catalyzes the terminal hydroxylation as the first step in the assimilation of alkanes and fatty acids. In Candida tropicalis (Yeast), this protein is Cytochrome P450 52A1 (CYP52A1).